The following is a 171-amino-acid chain: Large ribosomal subunit protein uL5 (171 aa).

Belongs to the universal ribosomal protein uL5 family. In terms of assembly, part of the 50S ribosomal subunit; contacts the 5S rRNA and probably tRNA. Forms a bridge to the 30S subunit in the 70S ribosome.

This is one of the proteins that bind and probably mediate the attachment of the 5S RNA into the large ribosomal subunit, where it forms part of the central protuberance. In the 70S ribosome it contacts protein S13 of the 30S subunit (bridge B1b), connecting the 2 subunits; this bridge is implicated in subunit movement. May contact the P site tRNA; the 5S rRNA and some of its associated proteins might help stabilize positioning of ribosome-bound tRNAs. In Methanocorpusculum labreanum (strain ATCC 43576 / DSM 4855 / Z), this protein is Large ribosomal subunit protein uL5.